We begin with the raw amino-acid sequence, 1363 residues long: Xanthine dehydrogenase (1363 aa).

The 2Fe-2S ferredoxin-type domain occupies 35-121 (DTIRFYLNGT…GKHVITVEGI (87 aa)). [2Fe-2S] cluster is bound by residues Cys73, Cys78, Cys81, Cys103, Cys142, Cys145, Cys177, and Cys179. In terms of domain architecture, FAD-binding PCMH-type spans 266–450 (FGNKRKKWYR…SSLRIPTASE (185 aa)). FAD is bound by residues 294–301 (LIGGSTET), Phe374, 384–388 (SPAGN), Asp397, and Lys459. Mo-molybdopterin contacts are provided by Gln798 and Phe829. Substrate-binding residues include Glu833 and Arg911. Arg943 provides a ligand contact to Mo-molybdopterin. Residues Phe945 and Thr1041 each coordinate substrate. Ala1110 is a Mo-molybdopterin binding site. Glu1295 serves as the catalytic Proton acceptor.

It belongs to the xanthine dehydrogenase family. The cofactor is FAD. It depends on Mo-molybdopterin as a cofactor. [2Fe-2S] cluster serves as cofactor.

Its subcellular location is the peroxisome. The enzyme catalyses xanthine + NAD(+) + H2O = urate + NADH + H(+). It carries out the reaction hypoxanthine + NAD(+) + H2O = xanthine + NADH + H(+). Functionally, key enzyme in purine degradation. Catalyzes the oxidation of hypoxanthine to xanthine. Catalyzes the oxidation of xanthine to uric acid. The protein is Xanthine dehydrogenase (hxA) of Emericella nidulans (strain FGSC A4 / ATCC 38163 / CBS 112.46 / NRRL 194 / M139) (Aspergillus nidulans).